We begin with the raw amino-acid sequence, 365 residues long: 3-isopropylmalate dehydrogenase (365 aa).

78–89 (GPKWGTGKVRPE) provides a ligand contact to NAD(+). Substrate is bound by residues R96, R106, R135, and D224. Residues D224, D249, and D253 each coordinate Mg(2+). 289-301 (GSAPDISGKGIVN) contributes to the NAD(+) binding site.

It belongs to the isocitrate and isopropylmalate dehydrogenases family. Homodimer. The cofactor is Mg(2+). It depends on Mn(2+) as a cofactor.

It localises to the cytoplasm. The enzyme catalyses (2R,3S)-3-isopropylmalate + NAD(+) = 4-methyl-2-oxopentanoate + CO2 + NADH. It functions in the pathway amino-acid biosynthesis; L-leucine biosynthesis; L-leucine from 3-methyl-2-oxobutanoate: step 3/4. Catalyzes the oxidation of 3-carboxy-2-hydroxy-4-methylpentanoate (3-isopropylmalate) to 3-carboxy-4-methyl-2-oxopentanoate. The product decarboxylates to 4-methyl-2 oxopentanoate. The polypeptide is 3-isopropylmalate dehydrogenase (LEUC) (Zymoseptoria tritici (Speckled leaf blotch fungus)).